A 253-amino-acid polypeptide reads, in one-letter code: Dihydroanticapsin 7-dehydrogenase (253 aa).

Residue 9-31 (LITGGASGIGYAAVQAFLNQQAN) participates in NAD(+) binding. Ser-139 is a binding site for substrate. The Proton acceptor role is filled by Tyr-152.

The protein belongs to the short-chain dehydrogenases/reductases (SDR) family.

The enzyme catalyses L-dihydroanticapsin + NAD(+) = L-anticapsin + NADH + H(+). The protein operates within antibiotic biosynthesis; bacilysin biosynthesis. Functionally, part of the bacABCDEFG operon responsible for the biosynthesis of bacilysin, an irreversible inactivator of the glutaminase domain of glucosamine synthetase. Catalyzes the dehydrogenation of the C7-hydroxyl group in the 4S-tetrahydrotyrosine (4S-H4Tyr) to yield anticapsin (epoxycyclohexanonyl-Ala). In Bacillus subtilis, this protein is Dihydroanticapsin 7-dehydrogenase.